A 302-amino-acid polypeptide reads, in one-letter code: Recombination-associated protein RdgC (302 aa).

This sequence belongs to the RdgC family.

It localises to the cytoplasm. It is found in the nucleoid. Its function is as follows. May be involved in recombination. The polypeptide is Recombination-associated protein RdgC (Actinobacillus succinogenes (strain ATCC 55618 / DSM 22257 / CCUG 43843 / 130Z)).